Here is a 348-residue protein sequence, read N- to C-terminus: Phenylalanine--tRNA ligase alpha subunit (348 aa).

Mg(2+) is bound at residue Glu-259.

It belongs to the class-II aminoacyl-tRNA synthetase family. Phe-tRNA synthetase alpha subunit type 1 subfamily. As to quaternary structure, tetramer of two alpha and two beta subunits. The cofactor is Mg(2+).

The protein resides in the cytoplasm. It catalyses the reaction tRNA(Phe) + L-phenylalanine + ATP = L-phenylalanyl-tRNA(Phe) + AMP + diphosphate + H(+). The sequence is that of Phenylalanine--tRNA ligase alpha subunit from Lacticaseibacillus casei (strain BL23) (Lactobacillus casei).